A 159-amino-acid chain; its full sequence is Trafficking protein particle complex subunit 6A (159 aa).

Ser-33 is subject to Phosphoserine.

Belongs to the TRAPP small subunits family. BET3 subfamily. As to quaternary structure, part of the multisubunit transport protein particle (TRAPP) complex. Heterodimer with TRAPPC3. The heterodimer TRAPPC3-TRAPPC6A interacts with TRAPPC2L. Interacts with TRAPPC2L.

The protein resides in the golgi apparatus. The protein localises to the cis-Golgi network. It is found in the endoplasmic reticulum. Functionally, may play a role in vesicular transport during the biogenesis of melanosomes. The sequence is that of Trafficking protein particle complex subunit 6A from Homo sapiens (Human).